The chain runs to 267 residues: MQDWEKLLQDDYLEIAGRKFKSRLIIGSGKFKDFQQTKEVLEASGAEIITVAVRRVNITDPTKENLLDYIDPKKYLILPNTAGCYTAEEAIKTAMMAREATGINWVKLEVIGDQKTLLPDMEETYKAAKVLVKEGFVVLPYIFDDPVFAKKFEDIGCAAVMPLAAPIGSGLGLQNPYNLIFIKEAVSVPVIVDAGIGSATDIPPVMELGVDGVLTNTALAEAKDPIKMAVAMKYATIAGRLAYLAGRMPKRTYAVPSSPTKGVPFKG.

Residue Lys107 is the Schiff-base intermediate with DXP of the active site. Residues Gly168, 194 to 195 (AG), and 216 to 217 (NT) contribute to the 1-deoxy-D-xylulose 5-phosphate site.

This sequence belongs to the ThiG family. In terms of assembly, homotetramer. Forms heterodimers with either ThiH or ThiS.

The protein resides in the cytoplasm. The catalysed reaction is [ThiS sulfur-carrier protein]-C-terminal-Gly-aminoethanethioate + 2-iminoacetate + 1-deoxy-D-xylulose 5-phosphate = [ThiS sulfur-carrier protein]-C-terminal Gly-Gly + 2-[(2R,5Z)-2-carboxy-4-methylthiazol-5(2H)-ylidene]ethyl phosphate + 2 H2O + H(+). It functions in the pathway cofactor biosynthesis; thiamine diphosphate biosynthesis. Catalyzes the rearrangement of 1-deoxy-D-xylulose 5-phosphate (DXP) to produce the thiazole phosphate moiety of thiamine. Sulfur is provided by the thiocarboxylate moiety of the carrier protein ThiS. In vitro, sulfur can be provided by H(2)S. The sequence is that of Thiazole synthase from Aquifex aeolicus (strain VF5).